Consider the following 486-residue polypeptide: MTNLQTGPTTRGLQRFAIPAVCGLIIFLGYYSQYLFNTSADLAPGPLTCRESLIFNILLVCLWLTYYQACTVDPGQYKFPPKEKEDGDNNNKRGGRGPQKAKWCKKCDAPKPPRAHHCRHCARCIPRMDHHCPWTGNCVSLQTFPHFLRFLVYTNAALVYFARLLWTRLYYGLWDQRHVPAYLGPSVGALLGCTMLSIAWFATQFALMVLLVTTVRSWMLGKTMIEEWEAERHETLLARSYDGDDYWGADGHGGFVPVKVEFPYDNGFWSNMAQAMGTNNFLRWFLPVGGGGPKISNDTPWKGTGWEYEENGFNDRVGMWPPPDPEKLRRERAGAGGKWPGARENLNTEKPEVDYYRSSEDMKTAFKRRQQEDLRRRQQRRQHSSEEDEIMAELEEDEGYEQRSRTRSPPQDGRAWMNSEGDTLWDYGVDVDEEENYGYPGQGVSESLPLVKTATGYNDGQGDEDEDVPLAELIRRRKVKSNGVHE.

Residues 1–15 (MTNLQTGPTTRGLQR) lie on the Cytoplasmic side of the membrane. A helical membrane pass occupies residues 16 to 36 (FAIPAVCGLIIFLGYYSQYLF). The Lumenal segment spans residues 37 to 51 (NTSADLAPGPLTCRE). A helical membrane pass occupies residues 52 to 72 (SLIFNILLVCLWLTYYQACTV). The Cytoplasmic portion of the chain corresponds to 73-146 (DPGQYKFPPK…NCVSLQTFPH (74 aa)). Residues 81 to 91 (PKEKEDGDNNN) show a composition bias toward basic and acidic residues. The segment at 81–101 (PKEKEDGDNNNKRGGRGPQKA) is disordered. One can recognise a DHHC domain in the interval 102 to 152 (KWCKKCDAPKPPRAHHCRHCARCIPRMDHHCPWTGNCVSLQTFPHFLRFLV). Catalysis depends on C132, which acts as the S-palmitoyl cysteine intermediate. The chain crosses the membrane as a helical span at residues 147 to 166 (FLRFLVYTNAALVYFARLLW). Topologically, residues 167–178 (TRLYYGLWDQRH) are lumenal. Residues 179 to 201 (VPAYLGPSVGALLGCTMLSIAWF) traverse the membrane as a helical segment. Over 202–486 (ATQFALMVLL…RKVKSNGVHE (285 aa)) the chain is Cytoplasmic. Positions 314 to 420 (NDRVGMWPPP…QDGRAWMNSE (107 aa)) are disordered. Basic and acidic residues-rich tracts occupy residues 324-333 (DPEKLRRERA) and 346-376 (LNTE…DLRR). Acidic residues predominate over residues 386 to 399 (EEDEIMAELEEDEG).

Belongs to the DHHC palmitoyltransferase family. PFA4 subfamily.

The protein resides in the endoplasmic reticulum membrane. It carries out the reaction L-cysteinyl-[protein] + hexadecanoyl-CoA = S-hexadecanoyl-L-cysteinyl-[protein] + CoA. Its function is as follows. Mediates the reversible addition of palmitate to target proteins, thereby regulating their membrane association and biological function. The protein is Palmitoyltransferase pfa4 of Neurospora crassa (strain ATCC 24698 / 74-OR23-1A / CBS 708.71 / DSM 1257 / FGSC 987).